A 470-amino-acid chain; its full sequence is SVGFKAGVKEYKLTYYTPEYETKDTDILAAFRVTPQPGVPPEEAGAAVAAESSTGTWTTVWTDGLTSLDRYKGRCYHIEPVPGEADQYICYVAYPLDLFEEGSVTNMFTSIVGNVFGFKALRALRLEDLRIPTAYIKTFQGPPHGIQVERDKLNKYGRPLLGCTIKPKLGLSAKNYGRAVYECLRGGLDFTKDDENVNSQPFMRWRDRFLFCAEALYKAQAETGEIKGHYLNATAGTCEEMMKRAVFARELGVPIVMHDYLTGGFTANTSLAHYCRDNGLLLHIHRAMHAVIDRQKNHGMHFRVLAKALRMSGGDHIHAGTVVGKLEGERDITLGFVDLLRDDFIEKDRSRGIYFTQDWVSLPGVIPVASGGIHVWHMPALTEIFGDDSVLQFGGGTLGHPWGNAPGAVANRVALEACVKARNEGRDLAAEGNAIIREASKWSPQLAAACEVWKEIKFEFKAVDTLDPEK.

Position 5 is an N6,N6,N6-trimethyllysine (lysine 5). Substrate is bound by residues asparagine 114 and threonine 164. Lysine 166 functions as the Proton acceptor in the catalytic mechanism. Lysine 168 is a binding site for substrate. Lysine 192, aspartate 194, and glutamate 195 together coordinate Mg(2+). Lysine 192 bears the N6-carboxylysine mark. The active-site Proton acceptor is the histidine 285. Substrate contacts are provided by arginine 286, histidine 318, and serine 370.

This sequence belongs to the RuBisCO large chain family. Type I subfamily. Heterohexadecamer of 8 large chains and 8 small chains; disulfide-linked. The disulfide link is formed within the large subunit homodimers. The cofactor is Mg(2+). The disulfide bond which can form in the large chain dimeric partners within the hexadecamer appears to be associated with oxidative stress and protein turnover.

The protein resides in the plastid. The protein localises to the chloroplast. The catalysed reaction is 2 (2R)-3-phosphoglycerate + 2 H(+) = D-ribulose 1,5-bisphosphate + CO2 + H2O. It catalyses the reaction D-ribulose 1,5-bisphosphate + O2 = 2-phosphoglycolate + (2R)-3-phosphoglycerate + 2 H(+). In terms of biological role, ruBisCO catalyzes two reactions: the carboxylation of D-ribulose 1,5-bisphosphate, the primary event in carbon dioxide fixation, as well as the oxidative fragmentation of the pentose substrate in the photorespiration process. Both reactions occur simultaneously and in competition at the same active site. The protein is Ribulose bisphosphate carboxylase large chain of Kigelia africana (Sausage tree).